The primary structure comprises 351 residues: Phosphoribosylformylglycinamidine cyclo-ligase (351 aa).

Belongs to the AIR synthase family.

It is found in the cytoplasm. The enzyme catalyses 2-formamido-N(1)-(5-O-phospho-beta-D-ribosyl)acetamidine + ATP = 5-amino-1-(5-phospho-beta-D-ribosyl)imidazole + ADP + phosphate + H(+). It participates in purine metabolism; IMP biosynthesis via de novo pathway; 5-amino-1-(5-phospho-D-ribosyl)imidazole from N(2)-formyl-N(1)-(5-phospho-D-ribosyl)glycinamide: step 2/2. This chain is Phosphoribosylformylglycinamidine cyclo-ligase, found in Lysinibacillus sphaericus (strain C3-41).